The following is a 448-amino-acid chain: FAD-linked oxidoreductase nodO (448 aa).

Residues 35–206 (PEHFPLAIVK…IRFFLKTCPL (172 aa)) enclose the FAD-binding PCMH-type domain.

It belongs to the oxygen-dependent FAD-linked oxidoreductase family. Requires FAD as cofactor.

It functions in the pathway secondary metabolite biosynthesis. Functionally, FAD-linked oxidoreductase; part of the gene cluster that mediates the biosynthesis of the indole diterpenes nodulisporic acids (NA). Nodulisporic acid A (NAA) and its chemically modified derivatives are of particular significance because of their highly potent insecticidal activity against blood-feeding arthropods and lack of observable adverse effects on mammals, in particular the tremogenicity associated with the paspaline-derived IDTs is not observed. The geranylgeranyl diphosphate (GGPP) synthase ggs1, localized outside of the cluster, is proposed to catalyze the first step in nodulisporic acid biosynthesis via conversion of farnesyl pyrophosphate and isopentyl pyrophosphate into geranylgeranyl pyrophosphate (GGPP). Condensation of indole-3-glycerol phosphate with GGPP by the prenyl transferase nodC then forms 3-geranylgeranylindole (3-GGI). Epoxidation by the FAD-dependent monooxygenase nodM leads to a single-epoxidized-GGI that is substrate of the terpene cyclase nodB for cyclization to yield emindole SB. The terminal methyl carbon, C28, of emindole SB is then oxidized by the cytochrome P450 monooxygenase nodW to produce nodulisporic acid F (NAF), the pentacyclic core of NAA. NAF is converted to nodulisporic acid E (NAE) via prenylation. This step is probably performed by one of the indole diterpene prenyltransferases nodD1 or nodD2. Several oxidation steps performed by the FAD-linked oxidoreductase nodO and one of the cytochrome P450 monooxygenase nodR, nodX or nodZ further convert NAE to nodulisporic acid D (NAD). NAD is substrate of cytochrome P450 monooxygenase nodJ to produce the precursor of nodulisporic acid C (NAC), converted to NAC by one of the indole diterpene prenyltransferases nodD1 or nodD2. The FAD-dependent monooxygenase nodY2 then oxidizes NAC to nodulisporic acid B (NAB). Finally NAB is converted to NAA by one of the cytochrome P450 monooxygenases nodR, nodX or nodZ. The chain is FAD-linked oxidoreductase nodO from Hypoxylon pulicicidum.